The sequence spans 156 residues: Transcription elongation factor GreA 1 (156 aa).

Residues 43–74 (RSENAEYSSAKRDLGRLESRLRYLNKQLQYAQ) adopt a coiled-coil conformation.

This sequence belongs to the GreA/GreB family.

Necessary for efficient RNA polymerase transcription elongation past template-encoded arresting sites. The arresting sites in DNA have the property of trapping a certain fraction of elongating RNA polymerases that pass through, resulting in locked ternary complexes. Cleavage of the nascent transcript by cleavage factors such as GreA or GreB allows the resumption of elongation from the new 3'terminus. GreA releases sequences of 2 to 3 nucleotides. This is Transcription elongation factor GreA 1 from Lactiplantibacillus plantarum (strain ATCC BAA-793 / NCIMB 8826 / WCFS1) (Lactobacillus plantarum).